We begin with the raw amino-acid sequence, 393 residues long: Riboflavin biosynthesis protein RibBA (393 aa).

The DHBP synthase stretch occupies residues Met-1–Ser-200. D-ribulose 5-phosphate is bound by residues Arg-27 to Glu-28, Asp-32, Arg-139 to Thr-143, and Glu-163. Glu-28 is a Mg(2+) binding site. His-142 contacts Mg(2+). The interval Ser-201–Ile-393 is GTP cyclohydrolase II. Arg-249–Ala-253 contacts GTP. Residues Cys-254, Cys-265, and Cys-267 each coordinate Zn(2+). Residues Gln-270, Glu-291–Arg-293, and Thr-313 each bind GTP. The active-site Proton acceptor; for GTP cyclohydrolase activity is Asp-325. The Nucleophile; for GTP cyclohydrolase activity role is filled by Arg-327. Ser-348 and Lys-353 together coordinate GTP.

The protein in the N-terminal section; belongs to the DHBP synthase family. This sequence in the C-terminal section; belongs to the GTP cyclohydrolase II family. It depends on Mg(2+) as a cofactor. Requires Mn(2+) as cofactor. Zn(2+) serves as cofactor.

It catalyses the reaction D-ribulose 5-phosphate = (2S)-2-hydroxy-3-oxobutyl phosphate + formate + H(+). The enzyme catalyses GTP + 4 H2O = 2,5-diamino-6-hydroxy-4-(5-phosphoribosylamino)-pyrimidine + formate + 2 phosphate + 3 H(+). Its pathway is cofactor biosynthesis; riboflavin biosynthesis; 2-hydroxy-3-oxobutyl phosphate from D-ribulose 5-phosphate: step 1/1. It participates in cofactor biosynthesis; riboflavin biosynthesis; 5-amino-6-(D-ribitylamino)uracil from GTP: step 1/4. Functionally, catalyzes the conversion of D-ribulose 5-phosphate to formate and 3,4-dihydroxy-2-butanone 4-phosphate. Catalyzes the conversion of GTP to 2,5-diamino-6-ribosylamino-4(3H)-pyrimidinone 5'-phosphate (DARP), formate and pyrophosphate. In Staphylococcus saprophyticus subsp. saprophyticus (strain ATCC 15305 / DSM 20229 / NCIMB 8711 / NCTC 7292 / S-41), this protein is Riboflavin biosynthesis protein RibBA.